Here is a 122-residue protein sequence, read N- to C-terminus: Small ribosomal subunit protein uS13 (122 aa).

Positions 93-122 (RKGLPVRGQTTKNNARTRKGKRKTVGSASK) are disordered. Basic residues predominate over residues 107–116 (ARTRKGKRKT).

Belongs to the universal ribosomal protein uS13 family. As to quaternary structure, part of the 30S ribosomal subunit. Forms a loose heterodimer with protein S19. Forms two bridges to the 50S subunit in the 70S ribosome.

Its function is as follows. Located at the top of the head of the 30S subunit, it contacts several helices of the 16S rRNA. In the 70S ribosome it contacts the 23S rRNA (bridge B1a) and protein L5 of the 50S subunit (bridge B1b), connecting the 2 subunits; these bridges are implicated in subunit movement. Contacts the tRNAs in the A and P-sites. This chain is Small ribosomal subunit protein uS13, found in Wolinella succinogenes (strain ATCC 29543 / DSM 1740 / CCUG 13145 / JCM 31913 / LMG 7466 / NCTC 11488 / FDC 602W) (Vibrio succinogenes).